The following is a 664-amino-acid chain: Gametogenetin-binding protein 2 (664 aa).

Disordered stretches follow at residues Gln375–Glu425 and Lys447–Ser476. Positions Glu376–Lys388 are enriched in basic residues. The span at Pro452–Gly475 shows a compositional bias: polar residues.

It localises to the cytoplasm. Its function is as follows. May be involved in spermatogenesis. In Xenopus laevis (African clawed frog), this protein is Gametogenetin-binding protein 2 (ggnbp2).